Here is a 378-residue protein sequence, read N- to C-terminus: Erythronate-4-phosphate dehydrogenase (378 aa).

Residues S45 and T66 each contribute to the substrate site. D146 serves as a coordination point for NAD(+). R207 is a catalytic residue. D231 contributes to the NAD(+) binding site. Residue E236 is part of the active site. H253 (proton donor) is an active-site residue. G256 provides a ligand contact to NAD(+).

It belongs to the D-isomer specific 2-hydroxyacid dehydrogenase family. PdxB subfamily. Homodimer.

It is found in the cytoplasm. It carries out the reaction 4-phospho-D-erythronate + NAD(+) = (R)-3-hydroxy-2-oxo-4-phosphooxybutanoate + NADH + H(+). Its pathway is cofactor biosynthesis; pyridoxine 5'-phosphate biosynthesis; pyridoxine 5'-phosphate from D-erythrose 4-phosphate: step 2/5. Functionally, catalyzes the oxidation of erythronate-4-phosphate to 3-hydroxy-2-oxo-4-phosphonooxybutanoate. This Wigglesworthia glossinidia brevipalpis protein is Erythronate-4-phosphate dehydrogenase.